The chain runs to 908 residues: Bifunctional uridylyltransferase/uridylyl-removing enzyme (908 aa).

The uridylyltransferase stretch occupies residues 1 to 360; the sequence is MFDTPAVFAR…LERIFRRRRR (360 aa). Positions 361 to 718 are uridylyl-removing; it reads IKQGYKVVRG…LDPDEDRDAT (358 aa). In terms of domain architecture, HD spans 477–599; sequence VDEHTIQTIV…VQTTKRLDLL (123 aa). 2 ACT domains span residues 719–801 and 829–904; these read RACF…LKSR and IIEV…GAER.

It belongs to the GlnD family. The cofactor is Mg(2+).

The catalysed reaction is [protein-PII]-L-tyrosine + UTP = [protein-PII]-uridylyl-L-tyrosine + diphosphate. It catalyses the reaction [protein-PII]-uridylyl-L-tyrosine + H2O = [protein-PII]-L-tyrosine + UMP + H(+). Uridylyltransferase (UTase) activity is inhibited by glutamine, while glutamine activates uridylyl-removing (UR) activity. Modifies, by uridylylation and deuridylylation, the PII regulatory proteins (GlnB and homologs), in response to the nitrogen status of the cell that GlnD senses through the glutamine level. Under low glutamine levels, catalyzes the conversion of the PII proteins and UTP to PII-UMP and PPi, while under higher glutamine levels, GlnD hydrolyzes PII-UMP to PII and UMP (deuridylylation). Thus, controls uridylylation state and activity of the PII proteins, and plays an important role in the regulation of nitrogen assimilation and metabolism. The polypeptide is Bifunctional uridylyltransferase/uridylyl-removing enzyme (Ruegeria pomeroyi (strain ATCC 700808 / DSM 15171 / DSS-3) (Silicibacter pomeroyi)).